Here is a 107-residue protein sequence, read N- to C-terminus: CLAVATA3/ESR (CLE)-related protein 13 (107 aa).

The signal sequence occupies residues methionine 1–glycine 25. The N-linked (GlcNAc...) asparagine glycan is linked to asparagine 29. Positions alanine 79–histidine 107 are disordered. Basic and acidic residues predominate over residues isoleucine 87–leucine 97. Hydroxyproline occurs at positions 99 and 102. Proline 102 carries O-linked (Ara...) hydroxyproline glycosylation.

The protein belongs to the CLV3/ESR signal peptide family. Post-translationally, the O-glycosylation (arabinosylation) of the hydroxyproline Pro-102 enhances binding affinity of the CLE13p peptide for its receptor. As to expression, mostly expressed in seedlings, roots, flowers, stems and apex, and, to a lower extent, in leaves and siliques.

The protein localises to the secreted. Its subcellular location is the extracellular space. Extracellular signal peptide that regulates cell fate. Represses root apical meristem maintenance. Regulates the transition of protophloem cells from proliferation to differentiation, thus impinging on postembryonic growth capacity of the root meristem; this signaling pathway requires CRN and CLV2. This Arabidopsis thaliana (Mouse-ear cress) protein is CLAVATA3/ESR (CLE)-related protein 13.